The primary structure comprises 433 residues: Aspartate--tRNA(Asp/Asn) ligase (433 aa).

Glutamate 167 lines the L-aspartate pocket. Residues 189–192 (QLFK) are aspartate. Arginine 211 is an L-aspartate binding site. Residues 211 to 213 (RAE), 219 to 221 (RHL), and glutamate 356 each bind ATP. Residues glutamate 356 and serine 359 each coordinate Mg(2+). 2 residues coordinate L-aspartate: serine 359 and arginine 363. 404-407 (GGER) is a binding site for ATP.

Belongs to the class-II aminoacyl-tRNA synthetase family. Type 2 subfamily. Homodimer. The cofactor is Mg(2+).

It localises to the cytoplasm. It carries out the reaction tRNA(Asx) + L-aspartate + ATP = L-aspartyl-tRNA(Asx) + AMP + diphosphate. Functionally, aspartyl-tRNA synthetase with relaxed tRNA specificity since it is able to aspartylate not only its cognate tRNA(Asp) but also tRNA(Asn). Reaction proceeds in two steps: L-aspartate is first activated by ATP to form Asp-AMP and then transferred to the acceptor end of tRNA(Asp/Asn). The protein is Aspartate--tRNA(Asp/Asn) ligase of Natronomonas pharaonis (strain ATCC 35678 / DSM 2160 / CIP 103997 / JCM 8858 / NBRC 14720 / NCIMB 2260 / Gabara) (Halobacterium pharaonis).